The primary structure comprises 237 residues: Endonuclease V (237 aa).

Mg(2+)-binding residues include aspartate 46 and aspartate 114.

The protein belongs to the endonuclease V family. Mg(2+) is required as a cofactor.

The protein resides in the cytoplasm. It carries out the reaction Endonucleolytic cleavage at apurinic or apyrimidinic sites to products with a 5'-phosphate.. DNA repair enzyme involved in the repair of deaminated bases. Selectively cleaves double-stranded DNA at the second phosphodiester bond 3' to a deoxyinosine leaving behind the intact lesion on the nicked DNA. The protein is Endonuclease V of Xanthomonas axonopodis pv. citri (strain 306).